We begin with the raw amino-acid sequence, 1405 residues long: DNA-directed RNA polymerase subunit beta' (1405 aa).

Positions 70, 72, 85, and 88 each coordinate Zn(2+). The Mg(2+) site is built by aspartate 460, aspartate 462, and aspartate 464. Zn(2+)-binding residues include cysteine 814, cysteine 888, cysteine 895, and cysteine 898.

Belongs to the RNA polymerase beta' chain family. In terms of assembly, the RNAP catalytic core consists of 2 alpha, 1 beta, 1 beta' and 1 omega subunit. When a sigma factor is associated with the core the holoenzyme is formed, which can initiate transcription. It depends on Mg(2+) as a cofactor. The cofactor is Zn(2+).

It catalyses the reaction RNA(n) + a ribonucleoside 5'-triphosphate = RNA(n+1) + diphosphate. Its function is as follows. DNA-dependent RNA polymerase catalyzes the transcription of DNA into RNA using the four ribonucleoside triphosphates as substrates. The polypeptide is DNA-directed RNA polymerase subunit beta' (Shewanella baltica (strain OS223)).